A 442-amino-acid chain; its full sequence is MSTSTVPPDGGEKVVVVGGNDWHEVVAAARAGAAAQAGERIVVNMGPQHPSTHGVLRLILEIEGEIITEARCGIGYLHTGIEKNLEYRNWTQGVTFVTRMDYLSPFFNETAYCLGVEKLLGITDDIPERASVIRVMLMELNRISSHLVALATGGMELGAMSAMFYGFREREEILRVFESITGLRMNHAYIRPGGLAADLPDDAITQVRRLVEILPKRLKDLEDLLNENYIWKARTVGVGYLDLTGCMALGITGPILRSTGLPHDLRKAQPYCGYENYEFDVITDDRCDSYGRYIIRVKEMHESVKIVEQCLARLKPGPVMISDKKLAWPADLKLGPDGLGNSPEHIAKIMGRSMEGLIHHFKLVTEGIRVPPGQVYVAVESPRGELGVHMVSDGGTRPYRVHYRDPSFTNLQAVAATCEGGMVADAIAAVASIDPVMGGVDR.

It belongs to the complex I 49 kDa subunit family. As to quaternary structure, NDH-1 is composed of 14 different subunits. Subunits NuoB, C, D, E, F, and G constitute the peripheral sector of the complex.

The protein localises to the cell membrane. The enzyme catalyses a quinone + NADH + 5 H(+)(in) = a quinol + NAD(+) + 4 H(+)(out). NDH-1 shuttles electrons from NADH, via FMN and iron-sulfur (Fe-S) centers, to quinones in the respiratory chain. The immediate electron acceptor for the enzyme in this species is believed to be a menaquinone. Couples the redox reaction to proton translocation (for every two electrons transferred, four hydrogen ions are translocated across the cytoplasmic membrane), and thus conserves the redox energy in a proton gradient. In Mycolicibacterium smegmatis (strain ATCC 700084 / mc(2)155) (Mycobacterium smegmatis), this protein is NADH-quinone oxidoreductase subunit D.